Here is a 113-residue protein sequence, read N- to C-terminus: Iron-sulfur cluster insertion protein ErpA (113 aa).

3 residues coordinate iron-sulfur cluster: Cys41, Cys105, and Cys107.

Belongs to the HesB/IscA family. Homodimer. Iron-sulfur cluster is required as a cofactor.

Its function is as follows. Required for insertion of 4Fe-4S clusters for at least IspG. This chain is Iron-sulfur cluster insertion protein ErpA, found in Aliivibrio fischeri (strain ATCC 700601 / ES114) (Vibrio fischeri).